The following is a 413-amino-acid chain: Multifunctional CCA protein (413 aa).

Residues Gly-8 and Arg-11 each coordinate ATP. Positions 8 and 11 each coordinate CTP. Positions 21 and 23 each coordinate Mg(2+). ATP contacts are provided by Arg-91, Arg-137, and Arg-140. The CTP site is built by Arg-91, Arg-137, and Arg-140. One can recognise an HD domain in the interval 228 to 329 (TGIHTLMVLE…VKIFDKADLW (102 aa)).

It belongs to the tRNA nucleotidyltransferase/poly(A) polymerase family. Bacterial CCA-adding enzyme type 1 subfamily. As to quaternary structure, monomer. Can also form homodimers and oligomers. Mg(2+) serves as cofactor. The cofactor is Ni(2+).

The enzyme catalyses a tRNA precursor + 2 CTP + ATP = a tRNA with a 3' CCA end + 3 diphosphate. It carries out the reaction a tRNA with a 3' CCA end + 2 CTP + ATP = a tRNA with a 3' CCACCA end + 3 diphosphate. Functionally, catalyzes the addition and repair of the essential 3'-terminal CCA sequence in tRNAs without using a nucleic acid template. Adds these three nucleotides in the order of C, C, and A to the tRNA nucleotide-73, using CTP and ATP as substrates and producing inorganic pyrophosphate. tRNA 3'-terminal CCA addition is required both for tRNA processing and repair. Also involved in tRNA surveillance by mediating tandem CCA addition to generate a CCACCA at the 3' terminus of unstable tRNAs. While stable tRNAs receive only 3'-terminal CCA, unstable tRNAs are marked with CCACCA and rapidly degraded. This Shewanella sediminis (strain HAW-EB3) protein is Multifunctional CCA protein.